The chain runs to 376 residues: 1-deoxy-D-xylulose 5-phosphate reductoisomerase (376 aa).

NADPH-binding residues include Thr12, Gly13, Ser14, Ile15, Asn39, and Asn116. Lys117 contributes to the 1-deoxy-D-xylulose 5-phosphate binding site. Glu118 lines the NADPH pocket. Asp142 serves as a coordination point for Mn(2+). 1-deoxy-D-xylulose 5-phosphate-binding residues include Ser143, Glu144, Ser164, and His187. Position 144 (Glu144) interacts with Mn(2+). Gly193 serves as a coordination point for NADPH. Residues Ser200, Asn205, Lys206, and Glu209 each contribute to the 1-deoxy-D-xylulose 5-phosphate site. Position 209 (Glu209) interacts with Mn(2+).

It belongs to the DXR family. The cofactor is Mg(2+). It depends on Mn(2+) as a cofactor.

The catalysed reaction is 2-C-methyl-D-erythritol 4-phosphate + NADP(+) = 1-deoxy-D-xylulose 5-phosphate + NADPH + H(+). It participates in isoprenoid biosynthesis; isopentenyl diphosphate biosynthesis via DXP pathway; isopentenyl diphosphate from 1-deoxy-D-xylulose 5-phosphate: step 1/6. Its function is as follows. Catalyzes the NADPH-dependent rearrangement and reduction of 1-deoxy-D-xylulose-5-phosphate (DXP) to 2-C-methyl-D-erythritol 4-phosphate (MEP). The polypeptide is 1-deoxy-D-xylulose 5-phosphate reductoisomerase (Thermotoga maritima (strain ATCC 43589 / DSM 3109 / JCM 10099 / NBRC 100826 / MSB8)).